The sequence spans 46 residues: Osteocalcin 2 (46 aa).

Residues 1–43 (AVPAGTLSPLQMESLREVCEVNVACDEMADTAGIVAAYTXFYG) enclose the Gla domain. Phosphothreonine is present on threonine 6. Positions 13, 17, 20, and 26 each coordinate Ca(2+). Residues glutamate 13, glutamate 17, and glutamate 20 each carry the 4-carboxyglutamate modification. Cysteine 19 and cysteine 25 are oxidised to a cystine. Glutamate 27 is modified (4-carboxyglutamate).

Belongs to the osteocalcin/matrix Gla protein family. In terms of processing, gamma-carboxyglutamate residues are formed by vitamin K dependent carboxylation by GGCX. These residues are essential for the binding of calcium.

The protein resides in the secreted. Functionally, the carboxylated form is one of the main organic components of the bone matrix, which constitutes 1-2% of the total bone protein. The carboxylated form binds strongly to apatite and calcium. The polypeptide is Osteocalcin 2 (Solea senegalensis (Senegalese sole)).